The primary structure comprises 315 residues: Voltage-dependent calcium channel gamma-3 subunit (315 aa).

Transmembrane regions (helical) follow at residues isoleucine 8–valine 28, serine 104–alanine 124, isoleucine 135–valine 155, and phenylalanine 181–isoleucine 201. Position 248 is a phosphoserine (serine 248).

Belongs to the PMP-22/EMP/MP20 family. CACNG subfamily. The L-type calcium channel is composed of five subunits: alpha-1, alpha-2/delta, beta and gamma. Acts as an auxiliary subunit for AMPA-selective glutamate receptors (AMPARs). Found in a complex with GRIA1, GRIA2, GRIA3, GRIA4, CNIH2, CNIH3, CACNG2, CACNG4, CACNG5, CACNG7 and CACNG8. Interacts with AP4M1 and GRIA1; associates GRIA1 with the adaptor protein complex 4 (AP-4) to target GRIA1 to the somatodendritic compartment of neurons.

It is found in the membrane. Its function is as follows. Regulates the trafficking to the somatodendritic compartment and gating properties of AMPA-selective glutamate receptors (AMPARs). Promotes their targeting to the cell membrane and synapses and modulates their gating properties by slowing their rates of activation, deactivation and desensitization. Does not show subunit-specific AMPA receptor regulation and regulates all AMPAR subunits. Thought to stabilize the calcium channel in an inactivated (closed) state. This chain is Voltage-dependent calcium channel gamma-3 subunit (CACNG3), found in Homo sapiens (Human).